Consider the following 130-residue polypeptide: Cuticle protein 14 isoform a (130 aa).

The 67-residue stretch at 24–90 (IGNYNFGYNE…NVHTNEPGTD (67 aa)) folds into the Chitin-binding type R&amp;R domain.

The chain is Cuticle protein 14 isoform a from Limulus polyphemus (Atlantic horseshoe crab).